The chain runs to 284 residues: 2-dehydro-3-deoxyphosphooctonate aldolase (284 aa).

It belongs to the KdsA family.

The protein localises to the cytoplasm. It carries out the reaction D-arabinose 5-phosphate + phosphoenolpyruvate + H2O = 3-deoxy-alpha-D-manno-2-octulosonate-8-phosphate + phosphate. It functions in the pathway carbohydrate biosynthesis; 3-deoxy-D-manno-octulosonate biosynthesis; 3-deoxy-D-manno-octulosonate from D-ribulose 5-phosphate: step 2/3. The protein operates within bacterial outer membrane biogenesis; lipopolysaccharide biosynthesis. This Pectobacterium carotovorum subsp. carotovorum (strain PC1) protein is 2-dehydro-3-deoxyphosphooctonate aldolase.